The following is a 466-amino-acid chain: MQGKNNLSCRPDTEDNEELFVDDQLLSPIGDSKNTSSFIYLGNPISFHEYNYDETMVSPENVKTAIAGSAKDHETCRGFKKTGTTSYKDFVFSRDYTNWTPTFWVLLSQLIDEFLKESELNFVAARDLLIKTKRLPKPFNNLLIQFQIQVPNVSRRTVYRHLKGYFNIPGYERFQYVKKASSGSWGANDIITLEKEIAMFKKKKNWSDEQFLQYVWSDNHRDEMKTLYNCLYELIDRDKKSIYNYLRRKYNPFKKKCKWTIEDEAELKKLVEKHGTSWSLIGKLSNRLPMHCRDHWRDYIQPGEINRSPWTIQEKEKLIKTVNQYLQSNPSSPIQWSLISKNMRNRHRHHCRWKYYTLISRDIHNSSPFKLGDSIWLIERMMDLNVAEERMIDWKCLSEYANHLWTADACKSHFERIKKTLFIDGLSTFSDTLIHLHKMLNSSPEETYISNLHDSYTAFSNADDLC.

2 DNA-binding domain regions span residues 94–249 (RDYT…LRRK) and 250–421 (YNPF…KKTL). HTH myb-type domains are found at residues 251–304 (NPFK…QPGE) and 305–363 (INRS…SRDI). DNA-binding regions (H-T-H motif) lie at residues 278 to 300 (WSLIGKLSNRLPMHCRDHWRDYI) and 336 to 359 (WSLISKNMRNRHRHHCRWKYYTLI).

The protein localises to the nucleus. Its function is as follows. Mediates site-specific replication termination at the polar replication barrier RTS1, a barrier which ensures that replication of the mat1 locus in S.pombe occurs in the centromere-proximal direction. The polypeptide is Replication termination factor 1 (rtf1) (Schizosaccharomyces pombe (strain 972 / ATCC 24843) (Fission yeast)).